Reading from the N-terminus, the 155-residue chain is 6,7-dimethyl-8-ribityllumazine synthase (155 aa).

5-amino-6-(D-ribitylamino)uracil contacts are provided by residues F23, 57 to 59 (AFE), and 81 to 83 (AVI). Position 86–87 (86–87 (ST)) interacts with (2S)-2-hydroxy-3-oxobutyl phosphate. H89 acts as the Proton donor in catalysis. A 5-amino-6-(D-ribitylamino)uracil-binding site is contributed by F114. R128 is a (2S)-2-hydroxy-3-oxobutyl phosphate binding site.

The protein belongs to the DMRL synthase family.

The catalysed reaction is (2S)-2-hydroxy-3-oxobutyl phosphate + 5-amino-6-(D-ribitylamino)uracil = 6,7-dimethyl-8-(1-D-ribityl)lumazine + phosphate + 2 H2O + H(+). It functions in the pathway cofactor biosynthesis; riboflavin biosynthesis; riboflavin from 2-hydroxy-3-oxobutyl phosphate and 5-amino-6-(D-ribitylamino)uracil: step 1/2. Its function is as follows. Catalyzes the formation of 6,7-dimethyl-8-ribityllumazine by condensation of 5-amino-6-(D-ribitylamino)uracil with 3,4-dihydroxy-2-butanone 4-phosphate. This is the penultimate step in the biosynthesis of riboflavin. The protein is 6,7-dimethyl-8-ribityllumazine synthase of Desulfatibacillum aliphaticivorans.